The chain runs to 306 residues: Non-specific ribonucleoside hydrolase RihC (306 aa).

H235 is a catalytic residue.

The protein belongs to the IUNH family. RihC subfamily.

Its function is as follows. Hydrolyzes both purine and pyrimidine ribonucleosides with a broad-substrate specificity. This is Non-specific ribonucleoside hydrolase RihC from Salmonella enteritidis PT4 (strain P125109).